The sequence spans 223 residues: uncharacterized protein (223 aa).

This is an uncharacterized protein from Mycoplasma pneumoniae (strain ATCC 29342 / M129 / Subtype 1) (Mycoplasmoides pneumoniae).